A 365-amino-acid chain; its full sequence is 2-aminoethylphosphonate--pyruvate transaminase (365 aa).

Lys-194 bears the N6-(pyridoxal phosphate)lysine mark.

The protein belongs to the class-V pyridoxal-phosphate-dependent aminotransferase family. PhnW subfamily. In terms of assembly, homodimer. Pyridoxal 5'-phosphate serves as cofactor.

It catalyses the reaction (2-aminoethyl)phosphonate + pyruvate = phosphonoacetaldehyde + L-alanine. In terms of biological role, involved in phosphonate degradation. The polypeptide is 2-aminoethylphosphonate--pyruvate transaminase (Bacillus cereus (strain ATCC 10987 / NRS 248)).